The chain runs to 122 residues: Large ribosomal subunit protein bL12 (122 aa).

It belongs to the bacterial ribosomal protein bL12 family. In terms of assembly, homodimer. Part of the ribosomal stalk of the 50S ribosomal subunit. Forms a multimeric L10(L12)X complex, where L10 forms an elongated spine to which 2 to 4 L12 dimers bind in a sequential fashion. Binds GTP-bound translation factors.

In terms of biological role, forms part of the ribosomal stalk which helps the ribosome interact with GTP-bound translation factors. Is thus essential for accurate translation. This chain is Large ribosomal subunit protein bL12, found in Clostridium botulinum (strain Langeland / NCTC 10281 / Type F).